A 457-amino-acid polypeptide reads, in one-letter code: UDP-N-acetylmuramoylalanine--D-glutamate ligase (457 aa).

An ATP-binding site is contributed by 117–123; it reads GTNGKST.

This sequence belongs to the MurCDEF family.

It localises to the cytoplasm. The enzyme catalyses UDP-N-acetyl-alpha-D-muramoyl-L-alanine + D-glutamate + ATP = UDP-N-acetyl-alpha-D-muramoyl-L-alanyl-D-glutamate + ADP + phosphate + H(+). Its pathway is cell wall biogenesis; peptidoglycan biosynthesis. In terms of biological role, cell wall formation. Catalyzes the addition of glutamate to the nucleotide precursor UDP-N-acetylmuramoyl-L-alanine (UMA). The chain is UDP-N-acetylmuramoylalanine--D-glutamate ligase from Paramagnetospirillum magneticum (strain ATCC 700264 / AMB-1) (Magnetospirillum magneticum).